The sequence spans 72 residues: Translation initiation factor IF-1 (72 aa).

Residues 1–72 (MAKEGAIEVE…TRGRIVYRYK (72 aa)) enclose the S1-like domain.

This sequence belongs to the IF-1 family. Component of the 30S ribosomal translation pre-initiation complex which assembles on the 30S ribosome in the order IF-2 and IF-3, IF-1 and N-formylmethionyl-tRNA(fMet); mRNA recruitment can occur at any time during PIC assembly.

Its subcellular location is the cytoplasm. In terms of biological role, one of the essential components for the initiation of protein synthesis. Stabilizes the binding of IF-2 and IF-3 on the 30S subunit to which N-formylmethionyl-tRNA(fMet) subsequently binds. Helps modulate mRNA selection, yielding the 30S pre-initiation complex (PIC). Upon addition of the 50S ribosomal subunit IF-1, IF-2 and IF-3 are released leaving the mature 70S translation initiation complex. The protein is Translation initiation factor IF-1 of Corynebacterium glutamicum (strain R).